The sequence spans 172 residues: Crossover junction endodeoxyribonuclease RuvC (172 aa).

Active-site residues include D7, E68, and D140. The Mg(2+) site is built by D7, E68, and D140.

It belongs to the RuvC family. Homodimer which binds Holliday junction (HJ) DNA. The HJ becomes 2-fold symmetrical on binding to RuvC with unstacked arms; it has a different conformation from HJ DNA in complex with RuvA. In the full resolvosome a probable DNA-RuvA(4)-RuvB(12)-RuvC(2) complex forms which resolves the HJ. Requires Mg(2+) as cofactor.

It is found in the cytoplasm. It catalyses the reaction Endonucleolytic cleavage at a junction such as a reciprocal single-stranded crossover between two homologous DNA duplexes (Holliday junction).. Its function is as follows. The RuvA-RuvB-RuvC complex processes Holliday junction (HJ) DNA during genetic recombination and DNA repair. Endonuclease that resolves HJ intermediates. Cleaves cruciform DNA by making single-stranded nicks across the HJ at symmetrical positions within the homologous arms, yielding a 5'-phosphate and a 3'-hydroxyl group; requires a central core of homology in the junction. The consensus cleavage sequence is 5'-(A/T)TT(C/G)-3'. Cleavage occurs on the 3'-side of the TT dinucleotide at the point of strand exchange. HJ branch migration catalyzed by RuvA-RuvB allows RuvC to scan DNA until it finds its consensus sequence, where it cleaves and resolves the cruciform DNA. The chain is Crossover junction endodeoxyribonuclease RuvC from Polynucleobacter asymbioticus (strain DSM 18221 / CIP 109841 / QLW-P1DMWA-1) (Polynucleobacter necessarius subsp. asymbioticus).